The primary structure comprises 208 residues: Thioesterase 1/protease 1/lysophospholipase L1 (208 aa).

An N-terminal signal peptide occupies residues 1–26 (MMNFNNVFRWHLPFLFLVLLTFRAAA). Catalysis depends on serine 36, which acts as the Nucleophile. The substrate site is built by glycine 70 and asparagine 99. Residues aspartate 180 and histidine 183 contribute to the active site.

The protein belongs to the 'GDSL' lipolytic enzyme family. As to quaternary structure, monomer or homotetramer.

It localises to the periplasm. It catalyses the reaction a fatty acyl-CoA + H2O = a fatty acid + CoA + H(+). It carries out the reaction hexadecanoyl-CoA + H2O = hexadecanoate + CoA + H(+). The enzyme catalyses (9Z)-hexadecenoyl-CoA + H2O = (9Z)-hexadecenoate + CoA + H(+). The catalysed reaction is octadecanoyl-CoA + H2O = octadecanoate + CoA + H(+). It catalyses the reaction (9Z)-octadecenoyl-CoA + H2O = (9Z)-octadecenoate + CoA + H(+). It carries out the reaction (9Z)-octadecenoyl-[ACP] + H2O = (9Z)-octadecenoate + holo-[ACP] + H(+). The enzyme catalyses (11Z)-octadecenoyl-CoA + H2O = (11Z)-octadecenoate + CoA + H(+). The catalysed reaction is tetradecanoyl-CoA + H2O = tetradecanoate + CoA + H(+). It catalyses the reaction (5Z,8Z,11Z,14Z)-eicosatetraenoyl-CoA + H2O = (5Z,8Z,11Z,14Z)-eicosatetraenoate + CoA + H(+). It carries out the reaction dodecanoyl-CoA + H2O = dodecanoate + CoA + H(+). The enzyme catalyses decanoyl-CoA + H2O = decanoate + CoA + H(+). The catalysed reaction is hexanoyl-CoA + H2O = hexanoate + CoA + H(+). It catalyses the reaction a 1-acyl-sn-glycero-3-phosphocholine + H2O = sn-glycerol 3-phosphocholine + a fatty acid + H(+). It carries out the reaction a phenyl acetate + H2O = a phenol + acetate + H(+). The enzyme catalyses a butanoate ester + H2O = an aliphatic alcohol + butanoate + H(+). The catalysed reaction is a hexanoate ester + H2O = an aliphatic alcohol + hexanoate + H(+). It catalyses the reaction an octanoate ester + H2O = an aliphatic alcohol + octanoate + H(+). TesA is a multifunctional esterase that can act as a thioesterase, arylesterase, lysophospholipase and protease. The chain is Thioesterase 1/protease 1/lysophospholipase L1 (tesA) from Escherichia coli O6:H1 (strain CFT073 / ATCC 700928 / UPEC).